Here is a 1447-residue protein sequence, read N- to C-terminus: ATP-dependent helicase SGS1 (1447 aa).

5 disordered regions span residues Ile37–Lys78, Lys243–Asn264, Lys342–Glu430, Lys552–Ser572, and Thr601–Asp639. Residues Gly59–Lys78 are compositionally biased toward polar residues. Residues Lys243–Lys253 show a composition bias toward basic and acidic residues. Polar residues predominate over residues Gly254–Asn264. The segment covering Glu363–Pro386 has biased composition (basic and acidic residues). 2 stretches are compositionally biased toward acidic residues: residues Glu403–Asp415 and Lys552–Asn561. Positions Thr601–His611 are enriched in basic and acidic residues. One can recognise a Helicase ATP-binding domain in the interval Val687–Val864. Ala714–Thr721 contributes to the ATP binding site. Residues Asp808–His811 carry the DEAH box motif. A Helicase C-terminal domain is found at Thr886–Gln1035. The 80-residue stretch at Leu1272–Glu1351 folds into the HRDC domain. Residues Gln1402 to Asn1411 show a composition bias toward polar residues. Positions Gln1402 to Lys1447 are disordered. A compositionally biased stretch (low complexity) spans Thr1412–Lys1424. Residues Ser1425–Lys1447 are compositionally biased toward basic residues.

Belongs to the helicase family. RecQ subfamily. As to quaternary structure, heterodimer with TOP3. Forms a complex with TOP3 and RMI1. Forms a ternary complex with a MLH1-MLH3 heterodimer (MutLbeta) during meiosis. Interacts with TOP2. Mg(2+) is required as a cofactor.

It localises to the nucleus. The protein localises to the nucleolus. It carries out the reaction Couples ATP hydrolysis with the unwinding of duplex DNA by translocating in the 3'-5' direction.. The enzyme catalyses ATP + H2O = ADP + phosphate + H(+). With respect to regulation, helicase activity on G-quadruplex DNA is inhibited by ATP-gamma-S. Functionally, ATP-dependent 3'-5' DNA helicase able to unwind duplex DNA or DNA:RNA heteroduplex. Unwinds G-quadruplex DNA; unwinding occurs in the 3'-5' direction, requires a 3' single-stranded end of at least 7 nucleotides. Helicase activity is higher on G-quadruplex substrates than on duplex DNA substrates. Assayed with a catalytic fragment (residues 400-1268). Telomeres and rDNA are notably G-rich; formation of G-quadruplex DNA would block DNA replication and transcription. Acts as an integral component of the S-phase checkpoint response, which arrests cells due to DNA damage or blocked fork progression during DNA replication. Can create a deleterious topological substrate that TOP3 preferentially resolves. The TOP3-SGS1 protein complex may function as a eukaryotic reverse gyrase introducing positive supercoils into extrachromosomal ribosomal DNA rings. Together with topoisomerase II has a role in chromosomal segregation. Maintains rDNA structure where it has a role in re-starting stalled replication forks. In Saccharomyces cerevisiae (strain ATCC 204508 / S288c) (Baker's yeast), this protein is ATP-dependent helicase SGS1.